Consider the following 2339-residue polypeptide: DNA-directed RNA polymerase III subunit RPC1 (2339 aa).

The Zn(2+) site is built by Cys-88, Cys-91, Cys-98, His-101, Cys-128, Cys-131, and Cys-175. 3 residues coordinate Mg(2+): Asp-611, Asp-613, and Asp-615. Residues 955–967 (PTEFFFHTMSGRE) form a bridging helix region. Disordered stretches follow at residues 1503–1557 (EKRK…NNYY) and 2038–2079 (LKSE…DSDR). Positions 1509–1520 (PKEEKENFDRNN) are enriched in basic and acidic residues. Positions 1521–1557 (YKMITDNNNNDNNNNNNDNNNNDNNNNNNNSNNNNYY) are enriched in low complexity. Residues 2038–2047 (LKSEKKKDIN) show a composition bias toward basic and acidic residues. A compositionally biased stretch (low complexity) spans 2049–2059 (DNNNNDDNNNN).

It belongs to the RNA polymerase beta' chain family. As to quaternary structure, component of the RNA polymerase III (Pol III) complex consisting of 17 subunits.

The protein localises to the nucleus. The catalysed reaction is RNA(n) + a ribonucleoside 5'-triphosphate = RNA(n+1) + diphosphate. Functionally, DNA-dependent RNA polymerase catalyzes the transcription of DNA into RNA using the four ribonucleoside triphosphates as substrates. Largest and catalytic core component of RNA polymerase III which synthesizes small RNAs, such as 5S rRNA and tRNAs. Forms the polymerase active center together with the second largest subunit. A single-stranded DNA template strand of the promoter is positioned within the central active site cleft of Pol III. A bridging helix emanates from RPC1 and crosses the cleft near the catalytic site and is thought to promote translocation of Pol III by acting as a ratchet that moves the RNA-DNA hybrid through the active site by switching from straight to bent conformations at each step of nucleotide addition. In Plasmodium falciparum, this protein is DNA-directed RNA polymerase III subunit RPC1.